The following is a 709-amino-acid chain: Ribosomal RNA large subunit methyltransferase K/L (709 aa).

The THUMP domain maps to 43-154 (LAYRITLWTR…NGVITIAMNF (112 aa)).

Belongs to the methyltransferase superfamily. RlmKL family.

The protein resides in the cytoplasm. The enzyme catalyses guanosine(2445) in 23S rRNA + S-adenosyl-L-methionine = N(2)-methylguanosine(2445) in 23S rRNA + S-adenosyl-L-homocysteine + H(+). The catalysed reaction is guanosine(2069) in 23S rRNA + S-adenosyl-L-methionine = N(2)-methylguanosine(2069) in 23S rRNA + S-adenosyl-L-homocysteine + H(+). Specifically methylates the guanine in position 2445 (m2G2445) and the guanine in position 2069 (m7G2069) of 23S rRNA. This is Ribosomal RNA large subunit methyltransferase K/L from Shewanella sp. (strain W3-18-1).